The sequence spans 600 residues: NADH-quinone oxidoreductase subunit C/D (600 aa).

The segment at 1–190 (MVNNMTDLTA…SPFELTKAKQ (190 aa)) is NADH dehydrogenase I subunit C. Residues 214–600 (DFMFLNLGPN…IDFVMSDVDR (387 aa)) are NADH dehydrogenase I subunit D.

It in the N-terminal section; belongs to the complex I 30 kDa subunit family. This sequence in the C-terminal section; belongs to the complex I 49 kDa subunit family. As to quaternary structure, NDH-1 is composed of 13 different subunits. Subunits NuoB, CD, E, F, and G constitute the peripheral sector of the complex.

Its subcellular location is the cell inner membrane. It catalyses the reaction a quinone + NADH + 5 H(+)(in) = a quinol + NAD(+) + 4 H(+)(out). NDH-1 shuttles electrons from NADH, via FMN and iron-sulfur (Fe-S) centers, to quinones in the respiratory chain. The immediate electron acceptor for the enzyme in this species is believed to be ubiquinone. Couples the redox reaction to proton translocation (for every two electrons transferred, four hydrogen ions are translocated across the cytoplasmic membrane), and thus conserves the redox energy in a proton gradient. This Escherichia coli O157:H7 protein is NADH-quinone oxidoreductase subunit C/D.